The following is a 327-amino-acid chain: Altered inheritance rate of mitochondria protein 25 (327 aa).

Belongs to the phospholipid scramblase family.

It localises to the mitochondrion. The polypeptide is Altered inheritance rate of mitochondria protein 25 (AIM25) (Saccharomyces cerevisiae (strain ATCC 204508 / S288c) (Baker's yeast)).